The following is a 312-amino-acid chain: Telomere-binding protein OPG077 (312 aa).

It belongs to the orthopoxvirus OPG077 family.

The protein resides in the virion. Its function is as follows. DNA-binding protein which binds to the hairpin form of the viral telomeric sequence. Required for the production of mature virions (MV). The polypeptide is Telomere-binding protein OPG077 (OPG077) (Monkeypox virus).